Here is a 327-residue protein sequence, read N- to C-terminus: Gibberellin 2-beta-dioxygenase 3 (327 aa).

Residues 173 to 278 enclose the Fe2OG dioxygenase domain; it reads GSDQVFRVNH…RVSFIYFGGP (106 aa). Residue Y183 coordinates 2-oxoglutarate. Residues H202, D204, and H259 each contribute to the Fe cation site. Residues R269 and S271 each coordinate 2-oxoglutarate.

Belongs to the iron/ascorbate-dependent oxidoreductase family. GA2OX subfamily. L-ascorbate is required as a cofactor. It depends on Fe(2+) as a cofactor. As to expression, expressed in roots, shoot apex, leaf blades, leaf sheaths, stems and flowers.

The enzyme catalyses gibberellin A1 + 2-oxoglutarate + O2 = gibberellin A8 + succinate + CO2. In terms of biological role, catalyzes the 2-beta-hydroxylation of several biologically active gibberellins, leading to the homeostatic regulation of their endogenous level. Catabolism of gibberellins (GAs) plays a central role in plant development. In vitro, converts GA1, GA20, and GA29 to the corresponding 2-beta-hydroxylated products GA8, GA29-catabolite, respectively. This is Gibberellin 2-beta-dioxygenase 3 from Oryza sativa subsp. japonica (Rice).